The following is an 81-amino-acid chain: ATP synthase subunit c, chloroplastic (81 aa).

2 consecutive transmembrane segments (helical) span residues 3–23 (PLIS…ASIG) and 53–73 (LLLS…VALA).

The protein belongs to the ATPase C chain family. F-type ATPases have 2 components, F(1) - the catalytic core - and F(0) - the membrane proton channel. F(1) has five subunits: alpha(3), beta(3), gamma(1), delta(1), epsilon(1). F(0) has four main subunits: a(1), b(1), b'(1) and c(10-14). The alpha and beta chains form an alternating ring which encloses part of the gamma chain. F(1) is attached to F(0) by a central stalk formed by the gamma and epsilon chains, while a peripheral stalk is formed by the delta, b and b' chains.

The protein localises to the plastid. It is found in the chloroplast thylakoid membrane. Functionally, f(1)F(0) ATP synthase produces ATP from ADP in the presence of a proton or sodium gradient. F-type ATPases consist of two structural domains, F(1) containing the extramembraneous catalytic core and F(0) containing the membrane proton channel, linked together by a central stalk and a peripheral stalk. During catalysis, ATP synthesis in the catalytic domain of F(1) is coupled via a rotary mechanism of the central stalk subunits to proton translocation. Key component of the F(0) channel; it plays a direct role in translocation across the membrane. A homomeric c-ring of between 10-14 subunits forms the central stalk rotor element with the F(1) delta and epsilon subunits. This Angiopteris evecta (Mule's foot fern) protein is ATP synthase subunit c, chloroplastic.